A 120-amino-acid chain; its full sequence is MDKKQSRLRRGRQTRAKIAELKVIRLAVHRTNLHIYASIIGPDAKILASASTAEAEVRKELAGQSGAGGNVAAAALVGKRVAEKALKAGIAEVAFDRSGFRYHGRVKAVAEAAREAGLKF.

Belongs to the universal ribosomal protein uL18 family. In terms of assembly, part of the 50S ribosomal subunit; part of the 5S rRNA/L5/L18/L25 subcomplex. Contacts the 5S and 23S rRNAs.

Its function is as follows. This is one of the proteins that bind and probably mediate the attachment of the 5S RNA into the large ribosomal subunit, where it forms part of the central protuberance. The protein is Large ribosomal subunit protein uL18 of Herminiimonas arsenicoxydans.